The following is a 148-amino-acid chain: Lipid droplet organization protein LDO16 (148 aa).

The Cytoplasmic portion of the chain corresponds to 1–7; sequence MVSTATF. Residues 8–28 form a helical membrane-spanning segment; the sequence is FFFVYLTLFVVIGFFSSLFII. Position 29 (proline 29) is a topological domain, lumenal. A helical membrane pass occupies residues 30–50; it reads LLGISFVFAIGVVSFGFCSNM. Over 51–148 the chain is Cytoplasmic; the sequence is SFKMAQLIYV…NKAGNKFQLS (98 aa). The segment at 83–110 is disordered; it reads QEPQEPLSTLRPVSNPTIPSPLRQTARP. Positions 93–109 are enriched in polar residues; the sequence is RPVSNPTIPSPLRQTAR. Serine 102 carries the post-translational modification Phosphoserine.

The protein belongs to the OSW5 family. In terms of assembly, interacts specifically with the seipin complex FLD1-LDB16. Only a fraction appears to associate with the seipin core components, suggesting that it may be an ancillary subunit of the complex. Found to interact with many mitochondrial and peroxisomal proteins.

The protein resides in the endoplasmic reticulum membrane. It is found in the lipid droplet. Its function is as follows. Involved in lipid droplet (LD) organization. Functions primarily upon nutrient depletion, facilitating LD consumption by lipophagy. Required for correct LD distribution during entry into stationary phase, where LDs accumulate at nucleus-vacuole junction (NVJ) contact sites. Involved in membrane interaction in a manner similar to those of SNARE proteins, binding to partners present in mitochondria or peroxisomes. Its partner on the mitochondrion side might be TOM22, a mitochondrial outer membrane protein, linking lipid droplets and mitochondria by protein-protein interaction. Involved in spore wall assembly. This Saccharomyces cerevisiae (strain ATCC 204508 / S288c) (Baker's yeast) protein is Lipid droplet organization protein LDO16.